The following is an 890-amino-acid chain: Nitrate reductase [NADH] 2 (890 aa).

Residue Cys-165 participates in Mo-molybdopterin binding. The 76-residue stretch at 513–588 (SKMFSVSEVK…LEDYRIGELI (76 aa)) folds into the Cytochrome b5 heme-binding domain. 2 residues coordinate heme: His-548 and His-571. An FAD-binding FR-type domain is found at 634–746 (RQKIPCKLVS…KGPLGHIEYT (113 aa)). FAD-binding positions include 686–689 (RAYT), 703–707 (LIKVY), Phe-708, Phe-715, 720–722 (LMS), and Thr-773.

The protein belongs to the nitrate reductase family. In terms of assembly, homodimer. The cofactor is FAD. Heme is required as a cofactor. Requires Mo-molybdopterin as cofactor.

The catalysed reaction is nitrite + NAD(+) + H2O = nitrate + NADH + H(+). Nitrate reductase is a key enzyme involved in the first step of nitrate assimilation in plants, fungi and bacteria. The polypeptide is Nitrate reductase [NADH] 2 (NIA2) (Phaseolus vulgaris (Kidney bean)).